A 452-amino-acid polypeptide reads, in one-letter code: Regulatory protein E2 (452 aa).

Residues 1–201 (MDNLSERFNV…DTIFAPVTSS (201 aa)) are transactivation domain. The segment at 198 to 356 (VTSSSPAAGE…SVRSVGRNPG (159 aa)) is disordered. A compositionally biased stretch (low complexity) spans 227-239 (SATSVSTRTTQRT). A compositionally biased stretch (basic residues) spans 256–270 (TRHKRQDIRRSRSTS). Positions 309-319 (GPTTRSQSRSL) are enriched in low complexity. The segment covering 320 to 330 (SRSRSRSRSRS) has biased composition (basic residues). Residues 368–452 (DPPVILLRGE…DWSLGHLDDL (85 aa)) form a DNA-binding domain region.

The protein belongs to the papillomaviridae E2 protein family. As to quaternary structure, binds DNA as homodimer. Interacts with protein E1; this interaction greatly increases E1 DNA-binding activity. Interacts with protein L1; this interaction enhances E2-dependent replication and transcription activation. Interacts with protein L2; this interaction inhibits E2 transcriptional activity but not DNA replication function E2. Interacts with protein E7; this interaction inhibits E7 oncogenic activity. Interacts with host TAF1; this interaction modulates E2-dependent transcriptional regulation. Interacts with host BRD4; this interaction mediates E2 transcriptional activation function. Additionally, the interaction with host BRD4 on mitotic chromosomes mediates tethering of the viral genome. Interacts with host TOPBP1; this interaction is required for optimal viral DNA replication. Phosphorylated.

The protein resides in the host nucleus. In terms of biological role, plays a role in the initiation of viral DNA replication. A dimer of E2 interacts with a dimer of E1 in order to improve specificity of E1 DNA binding activity. Once the complex recognizes and binds DNA at specific sites, the E2 dimer is removed from DNA. E2 also regulates viral transcription through binding to the E2RE response element (5'-ACCNNNNNNGGT-3') present in multiple copies in the regulatory regions of the viral genome. Activates or represses transcription depending on E2RE's position with regards to proximal promoter elements including the TATA-box. Repression occurs by sterically hindering the assembly of the transcription initiation complex. This chain is Regulatory protein E2, found in Human papillomavirus 17.